The primary structure comprises 1430 residues: Caskin-1 (1430 aa).

ANK repeat units lie at residues 48–77, 81–110, 114–143, 147–176, 188–217, and 220–249; these read DGFS…AVDI, KGMR…AVNV, EGHI…NPCI, SGKT…CAAL, NGTS…DINR, and KSGT…NAQV. Phosphotyrosine is present on Y253. The SH3 domain maps to 281–347; it reads SAALQVRATK…PSSLGEAIVK (67 aa). The disordered stretch occupies residues 348-372; it reads RAGSRTGSEPSPPQGGGSLGPSAPP. A Phosphoserine modification is found at S358. The tract at residues 375 to 471 is CASK-binding; that stretch reads IWVLRKPFAG…PKKLESSSAS (97 aa). R398 bears the Omega-N-methylarginine mark. Residues 421-430 show a composition bias toward polar residues; that stretch reads QKSVSESSPG. The segment at 421–472 is disordered; the sequence is QKSVSESSPGDSPVKPPEGSSGAARSQPPAAHAGQVYGEQPPKKLESSSASE. Phosphoserine is present on residues S423 and S432. SAM domains are found at residues 474–537 and 543–607; these read KSAE…LNIP and HKPA…LAEL. Phosphoserine is present on residues S635 and S648. Positions 667 to 679 are enriched in low complexity; it reads LSGPAEAGAAAAE. 4 disordered regions span residues 667 to 1001, 1015 to 1040, 1055 to 1371, and 1388 to 1407; these read LSGP…SAGS, GGGG…DPGR, GPDG…RQKL, and KIRQ…EKST. Residues 683–711 show a composition bias toward polar residues; that stretch reads NHLPATPRTTSRQESSLSGRARHMSSSQE. Phosphoserine is present on residues S722 and S727. T740 bears the Phosphothreonine mark. S790 carries the phosphoserine modification. The segment covering 847-859 has biased composition (pro residues); the sequence is PPAPGPVPPPVPA. Phosphoserine occurs at positions 890, 892, and 988. Over residues 1027–1036 the composition is skewed to pro residues; sequence GHPTPRPASP. Residue T1066 is modified to Phosphothreonine. Position 1068 is a phosphoserine (S1068). The segment covering 1147 to 1159 has biased composition (basic and acidic residues); it reads DTVKRRPKAKEPD. A compositionally biased stretch (pro residues) spans 1190–1214; that stretch reads PELPPPPPPAEPPPTDLMPLPPLPL. S1258 carries the post-translational modification Phosphoserine. T1267 is modified (phosphothreonine). Residues 1267-1282 show a composition bias toward pro residues; that stretch reads TPPPVSPKPPPPPTAP. Low complexity-rich tracts occupy residues 1283 to 1298, 1308 to 1326, and 1344 to 1358; these read KPAK…SATP, PPAA…SASP, and PRAA…PVAS. Phosphoserine is present on S1362. Basic and acidic residues predominate over residues 1388-1406; it reads KIRQEDGQGPRPSSIEEKS.

In terms of assembly, polymerizes, via the tandem SAM domains, to form long, 8 nM wide fibers, upon which other proteins can assemble. Binds the CaM kinase domain of CASK. Forms a ternary complex with CASK and LIN7A, LIN7B or LIN7C. Competes with APBA1 that forms a similar complex with CASK and LIN7 proteins. The tripartite complex CASKIN1/CASK/LIN7(A/B/C) binds the cytoplasmic tail of NRXN1. Expressed in brain. Localized primarily to the neuropil and enriched in synaptic areas (at protein level).

It is found in the cytoplasm. Functionally, may link the scaffolding protein CASK to downstream intracellular effectors. This chain is Caskin-1 (Caskin1), found in Rattus norvegicus (Rat).